A 242-amino-acid polypeptide reads, in one-letter code: Probable transcriptional regulatory protein Cthe_2075 (242 aa).

Belongs to the TACO1 family.

It is found in the cytoplasm. The polypeptide is Probable transcriptional regulatory protein Cthe_2075 (Acetivibrio thermocellus (strain ATCC 27405 / DSM 1237 / JCM 9322 / NBRC 103400 / NCIMB 10682 / NRRL B-4536 / VPI 7372) (Clostridium thermocellum)).